We begin with the raw amino-acid sequence, 431 residues long: Enolase (431 aa).

Q167 serves as a coordination point for (2R)-2-phosphoglycerate. E209 functions as the Proton donor in the catalytic mechanism. Mg(2+) contacts are provided by D246, E289, and D316. (2R)-2-phosphoglycerate is bound by residues K341, R370, S371, and K392. K341 functions as the Proton acceptor in the catalytic mechanism.

It belongs to the enolase family. In terms of assembly, component of the RNA degradosome, a multiprotein complex involved in RNA processing and mRNA degradation. The cofactor is Mg(2+).

The protein localises to the cytoplasm. It localises to the secreted. It is found in the cell surface. The enzyme catalyses (2R)-2-phosphoglycerate = phosphoenolpyruvate + H2O. The protein operates within carbohydrate degradation; glycolysis; pyruvate from D-glyceraldehyde 3-phosphate: step 4/5. Its function is as follows. Catalyzes the reversible conversion of 2-phosphoglycerate (2-PG) into phosphoenolpyruvate (PEP). It is essential for the degradation of carbohydrates via glycolysis. In Shewanella baltica (strain OS223), this protein is Enolase.